Consider the following 147-residue polypeptide: 3-dehydroquinate dehydratase (147 aa).

Catalysis depends on Tyr-23, which acts as the Proton acceptor. The substrate site is built by Asn-74, His-80, and Asp-87. His-100 acts as the Proton donor in catalysis. Substrate contacts are provided by residues 101-102 (IS) and Arg-111.

This sequence belongs to the type-II 3-dehydroquinase family. Homododecamer.

The catalysed reaction is 3-dehydroquinate = 3-dehydroshikimate + H2O. It functions in the pathway metabolic intermediate biosynthesis; chorismate biosynthesis; chorismate from D-erythrose 4-phosphate and phosphoenolpyruvate: step 3/7. Catalyzes a trans-dehydration via an enolate intermediate. The sequence is that of 3-dehydroquinate dehydratase from Prochlorococcus marinus (strain MIT 9215).